Reading from the N-terminus, the 265-residue chain is Hydroxyethylthiazole kinase (265 aa).

A substrate-binding site is contributed by M55. Residues R130 and S176 each coordinate ATP. G203 is a substrate binding site.

This sequence belongs to the Thz kinase family. Requires Mg(2+) as cofactor.

It catalyses the reaction 5-(2-hydroxyethyl)-4-methylthiazole + ATP = 4-methyl-5-(2-phosphooxyethyl)-thiazole + ADP + H(+). The protein operates within cofactor biosynthesis; thiamine diphosphate biosynthesis; 4-methyl-5-(2-phosphoethyl)-thiazole from 5-(2-hydroxyethyl)-4-methylthiazole: step 1/1. Functionally, catalyzes the phosphorylation of the hydroxyl group of 4-methyl-5-beta-hydroxyethylthiazole (THZ). This chain is Hydroxyethylthiazole kinase, found in Leptospira interrogans serogroup Icterohaemorrhagiae serovar Lai (strain 56601).